A 51-amino-acid chain; its full sequence is QKLCERPSGTWSGVCGNNNACKNQCINLEKARHGSCNYVFPAHKCICYFPC.

Q1 is modified (pyrrolidone carboxylic acid). 4 disulfides stabilise this stretch: C4/C51, C15/C36, C21/C45, and C25/C47.

As to quaternary structure, forms oligomers in its native state.

Functionally, possesses antifungal activity sensitive to inorganic cations. The sequence is that of Defensin-like protein 1 from Sinapis alba (White mustard).